The sequence spans 662 residues: DNA topoisomerase 4 subunit B (662 aa).

ATP is bound by residues Y20, N60, D87, 129-135 (GLHGVGV), and K359. Residues 439–553 (TELFIVEGDS…DGHLYLAKPP (115 aa)) form the Toprim domain. Residues E445, D518, and D520 each contribute to the Mg(2+) site.

Belongs to the type II topoisomerase family. ParE type 1 subfamily. Heterotetramer composed of ParC and ParE. The cofactor is Mg(2+). Requires Mn(2+) as cofactor. It depends on Ca(2+) as a cofactor.

It catalyses the reaction ATP-dependent breakage, passage and rejoining of double-stranded DNA.. In terms of biological role, topoisomerase IV is essential for chromosome segregation. It relaxes supercoiled DNA. Performs the decatenation events required during the replication of a circular DNA molecule. In Rickettsia bellii (strain RML369-C), this protein is DNA topoisomerase 4 subunit B.